The chain runs to 259 residues: Deoxyribose-phosphate aldolase (259 aa).

Catalysis depends on Asp102, which acts as the Proton donor/acceptor. The active-site Schiff-base intermediate with acetaldehyde is Lys167. Catalysis depends on Lys201, which acts as the Proton donor/acceptor.

It belongs to the DeoC/FbaB aldolase family. DeoC type 2 subfamily.

It localises to the cytoplasm. It catalyses the reaction 2-deoxy-D-ribose 5-phosphate = D-glyceraldehyde 3-phosphate + acetaldehyde. It participates in carbohydrate degradation; 2-deoxy-D-ribose 1-phosphate degradation; D-glyceraldehyde 3-phosphate and acetaldehyde from 2-deoxy-alpha-D-ribose 1-phosphate: step 2/2. Catalyzes a reversible aldol reaction between acetaldehyde and D-glyceraldehyde 3-phosphate to generate 2-deoxy-D-ribose 5-phosphate. The chain is Deoxyribose-phosphate aldolase from Shigella boydii serotype 4 (strain Sb227).